A 100-amino-acid chain; its full sequence is Apolipoprotein C-II (100 aa).

The N-terminal stretch at 1-22 (MGSRFLLALFLILLVLGCEVQA) is a signal peptide. The interval 66-74 (SVDEKLRDM) is lipid binding. The lipoprotein lipase cofactor stretch occupies residues 78–100 (SSAAMTTYASIFTDQILTLLKGE).

The protein belongs to the apolipoprotein C2 family. Proapolipoprotein C-II is synthesized as a sialic acid containing glycoprotein which is subsequently desialylated prior to its proteolytic processing. In terms of processing, proapolipoprotein C-II, the major form found in plasma undergoes proteolytic cleavage of its N-terminal hexapeptide to generate the mature form apolipoprotein C-II, which occurs as the minor form in plasma.

The protein resides in the secreted. Its function is as follows. Component of chylomicrons, very low-density lipoproteins (VLDL), low-density lipoproteins (LDL), and high-density lipoproteins (HDL) in plasma. Plays an important role in lipoprotein metabolism as an activator of lipoprotein lipase. The chain is Apolipoprotein C-II (APOC2) from Microtus ochrogaster (Prairie vole).